The following is a 514-amino-acid chain: Antiseptic resistance protein (514 aa).

At 1-23 (MISFFTKTTDMMTSKKRWTALVV) the chain is on the cytoplasmic side. The helical transmembrane segment at 24-41 (LAVSLFVVTMDMTILIMA) threads the bilayer. The Extracellular portion of the chain corresponds to 42 to 57 (LPELVRELEPSGTQQL). The chain crosses the membrane as a helical span at residues 58–75 (WIVDIYSLVLAGFIIPLS). Residues 76-86 (AFADKWGRKKA) lie on the Cytoplasmic side of the membrane. A helical membrane pass occupies residues 87–104 (LLTGFALFGLVSLAIFFA). Residues 105 to 112 (ESAEFVIA) lie on the Extracellular side of the membrane. The helical transmembrane segment at 113–130 (IRFLLGIAGALIMPTTLS) threads the bilayer. The Cytoplasmic segment spans residues 131-146 (MIRVIFENPKERATAL). The helical transmembrane segment at 147 to 164 (AVWSIASSIGAVFGPIIG) threads the bilayer. The Extracellular portion of the chain corresponds to 165–172 (GALLEQFS). Residues 173–190 (WHSAFLINVPFAIIAVVA) form a helical membrane-spanning segment. Residues 191–207 (GLFLLPESKLSKEKSHS) are Cytoplasmic-facing. The chain crosses the membrane as a helical span at residues 208-225 (WDIPSTILSIAGMIGLVW). Residues 226-237 (SIKEFSKEGLAD) lie on the Extracellular side of the membrane. A helical membrane pass occupies residues 238-255 (IIPWVVIVLAITMIVIFV). Topologically, residues 256-278 (KRNLSSSDPMLDVRLFKKRSFSA) are cytoplasmic. A helical transmembrane segment spans residues 279–295 (GTIAAFMTMFAMASVLL). Residues 296–315 (LASQWLQVVEELSPFKAGLY) are Extracellular-facing. A helical membrane pass occupies residues 316-333 (LLPMAIGDMVFAPIAPGL). Residues 334 to 341 (AARFGPKI) lie on the Cytoplasmic side of the membrane. Residues 342–360 (VLPSGIGIAAIGMFIMYFF) form a helical membrane-spanning segment. Residues 361–369 (GHPLSYSTM) lie on the Extracellular side of the membrane. A helical membrane pass occupies residues 370–387 (ALALILVGAGMASLAVAS). Topologically, residues 388 to 408 (ALIMLETPTSKAGNAAAVEES) are cytoplasmic. Residues 409–426 (MYDLGNVFGVAVLGSLSS) traverse the membrane as a helical segment. The Extracellular portion of the chain corresponds to 427–481 (MLYRVFLDISSFSSKGIVGDLAHVAEESVVGAVEVAKATGIKQLANEAVTSFNDA). Residues 482 to 499 (FVATALVGGIIMIIISIV) form a helical membrane-spanning segment. Residues 500-514 (VYLLIPKSLDITKQK) are Cytoplasmic-facing.

This sequence belongs to the major facilitator superfamily.

It localises to the cell membrane. Its function is as follows. Confers export-mediated resistance against antiseptic and disinfectant compounds such as intercalating dyes, quaternary ammonium salts and diamidines. This is Antiseptic resistance protein (qacA) from Staphylococcus aureus (strain Mu50 / ATCC 700699).